The primary structure comprises 396 residues: Phosphoglycerate kinase (396 aa).

Residues 24-26 (DFN), Arg-39, 62-65 (HLGR), Arg-120, and Arg-153 contribute to the substrate site. ATP contacts are provided by residues Lys-203, Gly-294, Glu-325, and 352-355 (GGDS).

Belongs to the phosphoglycerate kinase family. In terms of assembly, monomer.

The protein resides in the cytoplasm. The catalysed reaction is (2R)-3-phosphoglycerate + ATP = (2R)-3-phospho-glyceroyl phosphate + ADP. It participates in carbohydrate degradation; glycolysis; pyruvate from D-glyceraldehyde 3-phosphate: step 2/5. The polypeptide is Phosphoglycerate kinase (Dictyoglomus turgidum (strain DSM 6724 / Z-1310)).